The primary structure comprises 370 residues: Cytochrome b (370 aa).

A run of 4 helical transmembrane segments spans residues F25–V45, W69–I90, W105–L125, and F170–L190. Residues H75 and H89 each contribute to the heme b site. Residues H174 and H188 each contribute to the heme b site. An a ubiquinone-binding site is contributed by H193. A run of 4 helical transmembrane segments spans residues Y218–F238, L280–H300, F312–T332, and F339–P358.

It belongs to the cytochrome b family. In terms of assembly, the cytochrome bc1 complex contains 3 respiratory subunits (MT-CYB, CYC1 and UQCRFS1), 2 core proteins (UQCRC1 and UQCRC2) and probably 6 low-molecular weight proteins. Heme b serves as cofactor.

Its subcellular location is the mitochondrion inner membrane. Its function is as follows. Component of the ubiquinol-cytochrome c reductase complex (complex III or cytochrome b-c1 complex) that is part of the mitochondrial respiratory chain. The b-c1 complex mediates electron transfer from ubiquinol to cytochrome c. Contributes to the generation of a proton gradient across the mitochondrial membrane that is then used for ATP synthesis. The protein is Cytochrome b (MT-CYB) of Chilabothrus strigilatus fosteri (Bimini Island boa constrictor).